The sequence spans 849 residues: MDCMKKLKVEGTLELNLDDKDVRKNLKSLEKIKSKLEIESNINAVIKQLDELKNVKSEVEFKSNINMIIRELEEIEADASKMNINFDYDLSKLKSELEQLKNTKIDIKTNTDQILKQINKIKSELSEKQTIRAKVEVDRTEWDKLKKEWSEKYHINAIADVASVGTAYMGISDAEKYNELMTILRERGLTKDQAERLIQIGLYNGYSLDEIRDGIVYSNEAVLKLAASNDKYAAQILAAMAMAERGGEPGADDIARMISALTAMGKSNEEIMKMVNAEVLEMKQGHTEVAEAIREFSITMGDTLDPEKFASILIQAQAAGAQDVGQLAEAINDLALNSRQMGFDVEKALREIQKTKDDKTLAELAKKYGLTYEQIVKIHDYLQRVDLDKGLPDNTNELDRLISINKDQKGILETIKQDIEGWLAGHGYLQYGAELGVGLGGLGKILEIAIGAAIGSALKDAFGEIKSTLFGKISLDNLKLPELSKIKLPVDLEIPKIPKISMPKIKLPVDLKLPKIPKINIPKINLPNVSGLSNAFKGLGEAVRFAGRAFGFLSVVVEPVKQLLEGDIQGAIEHLKVGLIELAAWPVALGEALAAVTLAVGDFLGLFDLDGDSPLSAARAGILTLLAAFESIYSFITGDWSVVQNTLQEAFEELGMKEDEARQAAENLAQQWQQLPQQILDAFNGFVDNIKQTFDEWWNGLNEWWSQKIEEAKNWGSDLIQNIIDGIKEKFSELENAVSQAAGIISSYLHHTTPDVGPLKDDDKWGIHFMENIIGGIRKEIPNLKKTIDYTAKLMSSANPKNWKIQQVGITHSTSYSYGDIHINVVGNSFNEHQLAQKIALILKKQRFR.

A run of 2 helical transmembrane segments spans residues 587–607 (VALG…LGLF) and 620–640 (AGIL…TGDW).

Its subcellular location is the cell membrane. This is an uncharacterized protein from Methanocaldococcus jannaschii (strain ATCC 43067 / DSM 2661 / JAL-1 / JCM 10045 / NBRC 100440) (Methanococcus jannaschii).